Here is a 338-residue protein sequence, read N- to C-terminus: Phenylalanine--tRNA ligase alpha subunit (338 aa).

The interval 71 to 101 (QFEEKRSSLSQQTSSSDTYQSLPDLTLPGRQ) is disordered. Residues 78–92 (SLSQQTSSSDTYQSL) show a composition bias toward low complexity. Residue glutamate 253 coordinates Mg(2+).

The protein belongs to the class-II aminoacyl-tRNA synthetase family. Phe-tRNA synthetase alpha subunit type 1 subfamily. Tetramer of two alpha and two beta subunits. Mg(2+) serves as cofactor.

The protein resides in the cytoplasm. It carries out the reaction tRNA(Phe) + L-phenylalanine + ATP = L-phenylalanyl-tRNA(Phe) + AMP + diphosphate + H(+). This is Phenylalanine--tRNA ligase alpha subunit from Desulfotalea psychrophila (strain LSv54 / DSM 12343).